The sequence spans 417 residues: NADH-quinone oxidoreductase subunit D (417 aa).

The protein belongs to the complex I 49 kDa subunit family. In terms of assembly, NDH-1 is composed of 14 different subunits. Subunits NuoB, C, D, E, F, and G constitute the peripheral sector of the complex.

It is found in the cell inner membrane. It carries out the reaction a quinone + NADH + 5 H(+)(in) = a quinol + NAD(+) + 4 H(+)(out). Its function is as follows. NDH-1 shuttles electrons from NADH, via FMN and iron-sulfur (Fe-S) centers, to quinones in the respiratory chain. The immediate electron acceptor for the enzyme in this species is believed to be ubiquinone. Couples the redox reaction to proton translocation (for every two electrons transferred, four hydrogen ions are translocated across the cytoplasmic membrane), and thus conserves the redox energy in a proton gradient. The sequence is that of NADH-quinone oxidoreductase subunit D from Dechloromonas aromatica (strain RCB).